Consider the following 415-residue polypeptide: Gamma-glutamyl phosphate reductase (415 aa).

Belongs to the gamma-glutamyl phosphate reductase family.

The protein localises to the cytoplasm. It catalyses the reaction L-glutamate 5-semialdehyde + phosphate + NADP(+) = L-glutamyl 5-phosphate + NADPH + H(+). Its pathway is amino-acid biosynthesis; L-proline biosynthesis; L-glutamate 5-semialdehyde from L-glutamate: step 2/2. Functionally, catalyzes the NADPH-dependent reduction of L-glutamate 5-phosphate into L-glutamate 5-semialdehyde and phosphate. The product spontaneously undergoes cyclization to form 1-pyrroline-5-carboxylate. The chain is Gamma-glutamyl phosphate reductase from Parabacteroides distasonis (strain ATCC 8503 / DSM 20701 / CIP 104284 / JCM 5825 / NCTC 11152).